The following is a 445-amino-acid chain: uncharacterized protein (445 aa).

Helical transmembrane passes span 16-36 (IVSLGVTASSFLFINGVAFLI), 52-72 (LLASMPSWGLVVTMFAWGYLL), 98-118 (VHSLLWIGVFLFLGGMAAGGC), 168-188 (GLMFPAVVCTLAAVASVLGIV), 219-239 (ASALLMMPQTVTVTFMLVWLI), 243-263 (GWSVAQAGVLVTISQLLGALG), 283-303 (LIAAAAAATLFLLAAVDNEGS), and 366-386 (AAYPTAWALCGVFPLAAVPLV). The segment at 417 to 445 (AWPNGPRRPGPPGQPRRVRQGGTAITPPT) is disordered.

This sequence belongs to the major facilitator superfamily.

The protein resides in the cell membrane. This is an uncharacterized protein from Mycobacterium tuberculosis (strain CDC 1551 / Oshkosh).